We begin with the raw amino-acid sequence, 721 residues long: Catalase-peroxidase 1 (721 aa).

The tryptophyl-tyrosyl-methioninium (Trp-Tyr) (with M-249) cross-link spans 98–223 (WHAAGSYRVA…LAAVQMGLIY (126 aa)). Residue His99 is the Proton acceptor of the active site. The tryptophyl-tyrosyl-methioninium (Tyr-Met) (with W-98) cross-link spans 223-249 (YVNPEGVNGQPDPLRTAQDVRVTFGRM). His264 contacts heme b.

Belongs to the peroxidase family. Peroxidase/catalase subfamily. Homodimer or homotetramer. Requires heme b as cofactor. In terms of processing, formation of the three residue Trp-Tyr-Met cross-link is important for the catalase, but not the peroxidase activity of the enzyme.

The enzyme catalyses H2O2 + AH2 = A + 2 H2O. The catalysed reaction is 2 H2O2 = O2 + 2 H2O. Functionally, bifunctional enzyme with both catalase and broad-spectrum peroxidase activity. The chain is Catalase-peroxidase 1 from Legionella pneumophila (strain Paris).